A 285-amino-acid polypeptide reads, in one-letter code: Ribose-phosphate pyrophosphokinase (285 aa).

ATP contacts are provided by residues D34–E36 and R91–Q92. Residues H124 and D162 each contribute to the Mg(2+) site. Residue K185 is part of the active site. Residues R187, D211, and S215 to T219 contribute to the D-ribose 5-phosphate site.

This sequence belongs to the ribose-phosphate pyrophosphokinase family. Class III (archaeal) subfamily. Requires Mg(2+) as cofactor.

Its subcellular location is the cytoplasm. It catalyses the reaction D-ribose 5-phosphate + ATP = 5-phospho-alpha-D-ribose 1-diphosphate + AMP + H(+). The protein operates within metabolic intermediate biosynthesis; 5-phospho-alpha-D-ribose 1-diphosphate biosynthesis; 5-phospho-alpha-D-ribose 1-diphosphate from D-ribose 5-phosphate (route I): step 1/1. Its function is as follows. Involved in the biosynthesis of the central metabolite phospho-alpha-D-ribosyl-1-pyrophosphate (PRPP) via the transfer of pyrophosphoryl group from ATP to 1-hydroxyl of ribose-5-phosphate (Rib-5-P). The polypeptide is Ribose-phosphate pyrophosphokinase (Pyrococcus abyssi (strain GE5 / Orsay)).